We begin with the raw amino-acid sequence, 117 residues long: Large ribosomal subunit protein bL20 (117 aa).

It belongs to the bacterial ribosomal protein bL20 family.

Functionally, binds directly to 23S ribosomal RNA and is necessary for the in vitro assembly process of the 50S ribosomal subunit. It is not involved in the protein synthesizing functions of that subunit. The polypeptide is Large ribosomal subunit protein bL20 (Natranaerobius thermophilus (strain ATCC BAA-1301 / DSM 18059 / JW/NM-WN-LF)).